We begin with the raw amino-acid sequence, 161 residues long: Allophycocyanin beta chain (161 aa).

An N4-methylasparagine modification is found at Asn71. Cys81 lines the (2R,3E)-phycocyanobilin pocket.

Belongs to the phycobiliprotein family. As to quaternary structure, heterodimer of an alpha and a beta chain. Contains one covalently linked phycocyanobilin chromophore.

Its subcellular location is the cellular thylakoid membrane. Its function is as follows. Light-harvesting photosynthetic bile pigment-protein from the phycobiliprotein complex. Allophycocyanin has a maximum absorption at approximately 650 nanometers. The protein is Allophycocyanin beta chain (apcB) of Anabaena cylindrica.